Reading from the N-terminus, the 112-residue chain is Integration host factor subunit alpha (112 aa).

The protein belongs to the bacterial histone-like protein family. As to quaternary structure, heterodimer of an alpha and a beta chain.

Its function is as follows. This protein is one of the two subunits of integration host factor, a specific DNA-binding protein that functions in genetic recombination as well as in transcriptional and translational control. The protein is Integration host factor subunit alpha of Rhizobium leguminosarum bv. trifolii (strain WSM2304).